Here is a 349-residue protein sequence, read N- to C-terminus: Protein POOR HOMOLOGOUS SYNAPSIS 1 (349 aa).

It is found in the cytoplasm. Functionally, required for accurate chromosome segregation in meiosis. Required for pairing to occur between homologous chromosomes. Acts in early recombination steps and ensures pairing fidelity and proper repair of meiotic DNA double-strand-breaks. Regulates recombination and pairing of homologous chromosomes during meiotic prophase by controlling transport of RAD50 from cytoplasm to the nucleus. May affect pairing of the gene-rich fraction of the genome rather than preventing pairing between repetitive DNA elements. In Arabidopsis thaliana (Mouse-ear cress), this protein is Protein POOR HOMOLOGOUS SYNAPSIS 1.